The chain runs to 318 residues: Deoxyhypusine hydroxylase (318 aa).

Residues histidine 65, glutamate 66, histidine 98, and glutamate 99 each coordinate Fe cation. 4 HEAT-like PBS-type repeats span residues 96–122 (VRHE…YYKE), 194–220 (YRYR…GFKD), 225–251 (FRHE…VLEN), and 258–284 (VRHE…FSKD). 4 residues coordinate Fe cation: histidine 227, glutamate 228, histidine 260, and glutamate 261.

This sequence belongs to the deoxyhypusine hydroxylase family. Fe(2+) serves as cofactor.

Its subcellular location is the cytoplasm. The protein localises to the nucleus. The enzyme catalyses [eIF5A protein]-deoxyhypusine + AH2 + O2 = [eIF5A protein]-hypusine + A + H2O. Its pathway is protein modification; eIF5A hypusination. Functionally, catalyzes the hydroxylation of the N(6)-(4-aminobutyl)-L-lysine intermediate to form hypusine, an essential post-translational modification only found in mature eIF-5A factor. This Schizosaccharomyces pombe (strain 972 / ATCC 24843) (Fission yeast) protein is Deoxyhypusine hydroxylase (lia1).